We begin with the raw amino-acid sequence, 413 residues long: CinA-like protein (413 aa).

The protein belongs to the CinA family.

This chain is CinA-like protein, found in Geotalea daltonii (strain DSM 22248 / JCM 15807 / FRC-32) (Geobacter daltonii).